The chain runs to 321 residues: Cytochrome c biogenesis protein CcsA (321 aa).

The next 8 helical transmembrane spans lie at 9–29 (ILTH…LMNL), 44–64 (GMIA…IYSG), 71–91 (LYES…VPYF), 98–118 (FSAI…SGLL), 143–163 (MLLS…LLVI), 225–245 (VISL…VWAN), 252–272 (WNWD…AIYL), and 286–306 (AIVA…VNLL).

The protein belongs to the CcmF/CycK/Ccl1/NrfE/CcsA family. May interact with Ccs1.

It is found in the plastid. The protein localises to the chloroplast thylakoid membrane. Its function is as follows. Required during biogenesis of c-type cytochromes (cytochrome c6 and cytochrome f) at the step of heme attachment. This chain is Cytochrome c biogenesis protein CcsA, found in Acorus calamus var. americanus (American sweet flag).